The primary structure comprises 391 residues: Alpha-2B adrenergic receptor (391 aa).

A helical membrane pass occupies residues 1–25 (AIAAVITFLILFTIFGNALVILAVL). Over 26–36 (TSRSLRAPQNL) the chain is Cytoplasmic. A helical transmembrane segment spans residues 37-62 (FLVSLAAADILVATLIIPFSLANELL). Residues 63-72 (GYWYFRRTWC) are Extracellular-facing. A disulfide bridge connects residues Cys-72 and Cys-151. The chain crosses the membrane as a helical span at residues 73 to 95 (EVYLALDVLFCTSSIVHLCAISL). Over 96–117 (DRYWAVSRALEYNSKRTPRRIK) the chain is Cytoplasmic. Residues 118 to 140 (CIILTVWLIAAVISLPPLIYKGD) form a helical membrane-spanning segment. Residues 141-156 (QGPQPRGRPQCKLNQE) lie on the Extracellular side of the membrane. The chain crosses the membrane as a helical span at residues 157–180 (AWYILASSIGSFFAPCLIMILVYL). Topologically, residues 181–355 (RIYLIAKRSH…LTREKRFTFV (175 aa)) are cytoplasmic. 2 disordered regions span residues 194–218 (PRAKGAPGKGESKQTGQASLGAPSS) and 233–312 (EANR…PLQQ). The span at 233 to 247 (EANRHSKSTGEKVEG) shows a compositional bias: basic and acidic residues. The segment covering 256 to 266 (PGVPPSWPPLP) has biased composition (pro residues). The segment covering 271–281 (GQEEDIYRASP) has biased composition (basic and acidic residues). Positions 282 to 294 (EEEAGDDEEEECE) are enriched in acidic residues. Residues 295-309 (PQAVPVSPASACSPP) show a composition bias toward low complexity. A helical transmembrane segment spans residues 356 to 379 (LAVVIGVFVLCWFPFFFSYSLGAI). Topologically, residues 380–388 (CPQHCKVPH) are extracellular. A helical membrane pass occupies residues 389–391 (GLF).

It belongs to the G-protein coupled receptor 1 family. Adrenergic receptor subfamily. ADRA2B sub-subfamily. Interacts with RAB26. Interacts with PPP1R9B. Interacts with GGA1, GGA2 and GGA3.

The protein localises to the cell membrane. Its function is as follows. Alpha-2 adrenergic receptors mediate the catecholamine-induced inhibition of adenylate cyclase through the action of G proteins. This is Alpha-2B adrenergic receptor (ADRA2B) from Erinaceus europaeus (Western European hedgehog).